The following is a 226-amino-acid chain: 7-cyano-7-deazaguanine synthase (226 aa).

An ATP-binding site is contributed by 8 to 18; the sequence is LSGGLDSTTVL. Zn(2+)-binding residues include Cys-190, Cys-198, Cys-201, and Cys-204.

The protein belongs to the QueC family. In terms of assembly, homodimer. Zn(2+) serves as cofactor.

It carries out the reaction 7-carboxy-7-deazaguanine + NH4(+) + ATP = 7-cyano-7-deazaguanine + ADP + phosphate + H2O + H(+). It participates in purine metabolism; 7-cyano-7-deazaguanine biosynthesis. In terms of biological role, catalyzes the ATP-dependent conversion of 7-carboxy-7-deazaguanine (CDG) to 7-cyano-7-deazaguanine (preQ(0)). This Clostridium kluyveri (strain ATCC 8527 / DSM 555 / NBRC 12016 / NCIMB 10680 / K1) protein is 7-cyano-7-deazaguanine synthase.